A 137-amino-acid polypeptide reads, in one-letter code: Nucleoside diphosphate kinase (137 aa).

ATP-binding residues include Lys9, Phe57, Arg85, Thr91, Arg102, and Asn112. Residue His115 is the Pros-phosphohistidine intermediate of the active site.

It belongs to the NDK family. Homotetramer. It depends on Mg(2+) as a cofactor.

The protein localises to the cytoplasm. It catalyses the reaction a 2'-deoxyribonucleoside 5'-diphosphate + ATP = a 2'-deoxyribonucleoside 5'-triphosphate + ADP. It carries out the reaction a ribonucleoside 5'-diphosphate + ATP = a ribonucleoside 5'-triphosphate + ADP. Its function is as follows. Major role in the synthesis of nucleoside triphosphates other than ATP. The ATP gamma phosphate is transferred to the NDP beta phosphate via a ping-pong mechanism, using a phosphorylated active-site intermediate. The polypeptide is Nucleoside diphosphate kinase (Campylobacter jejuni subsp. doylei (strain ATCC BAA-1458 / RM4099 / 269.97)).